A 174-amino-acid polypeptide reads, in one-letter code: RNA pyrophosphohydrolase (174 aa).

The 144-residue stretch at 6–149 (GFRANVGIVI…KREVYRRAMK (144 aa)) folds into the Nudix hydrolase domain. A Nudix box motif is present at residues 38–59 (GGIDEGETAEQTMYRELYEEVG).

This sequence belongs to the Nudix hydrolase family. RppH subfamily. It depends on a divalent metal cation as a cofactor.

Its function is as follows. Accelerates the degradation of transcripts by removing pyrophosphate from the 5'-end of triphosphorylated RNA, leading to a more labile monophosphorylated state that can stimulate subsequent ribonuclease cleavage. This is RNA pyrophosphohydrolase from Pseudoalteromonas atlantica (strain T6c / ATCC BAA-1087).